Here is a 504-residue protein sequence, read N- to C-terminus: 26S proteasome non-ATPase regulatory subunit 5 (504 aa).

The residue at position 2 (Ala-2) is an N-acetylalanine.

Belongs to the proteasome subunit S5B/HSM3 family. In terms of assembly, interacts with PSMC1, PSMC2, PSMD1 and PSMD6. Part of transient complex containing PSMD5, PSMC2, PSMC1 and PSMD2 formed during the assembly of the 26S proteasome.

Its function is as follows. Acts as a chaperone during the assembly of the 26S proteasome, specifically of the base subcomplex of the PA700/19S regulatory complex (RC). In the initial step of the base subcomplex assembly is part of an intermediate PSMD5:PSMC2:PSMC1:PSMD2 module which probably assembles with a PSMD10:PSMC4:PSMC5:PAAF1 module followed by dissociation of PSMD5. This Mus musculus (Mouse) protein is 26S proteasome non-ATPase regulatory subunit 5 (Psmd5).